The primary structure comprises 564 residues: MMPPDIKPRSRDVTDGLEKAAARGMLRAVGMNDDDFAKAQIGVASSWNEITPCNLSLDRLAKAVKEGVFSAGGYPLEFGTISVSDGISMGHQGMHFSLVSREVIADSVETVMQAERLDGSVLLAGCDKSLPGMLMAAARLDLASVFLYAGSILPGRTKLSDGTEHEVTLIDAFEAVGACSRGLMPRADVDAIERAICPGEGACGGMYTANTMASAAEALGMSLPGSAAPPATDRRRDGFARRSGQAVIELLRRGITARDILTKEAFENAIAVVMAFGGSTNAILHLLAIAHEADVTLSLEDFSRIGFKVPHIADVKPFGRHVMFDVDHIGGVPVVMKALLDAGLLHGDCLTVTGQTMAENLASIAPPDPDGQVIRTLHNPIHPTGGITILRGSLAPDGAVVKTAGLDSDVFEGTARVFDGERAALDALKDGTIAKGDVVVIRYEGPKGGPGMREMLAITGAIKGAGLGKDVLLLTDGRFSGGTTGFCVGHIAPEAVEAGPIAFLRDGDRVLLDVVGCSLDVLVDPVEFSSRKKDFIPPAPRYTTGVLAKYVKLVSSATVGAVCG.

Cys-53 provides a ligand contact to [2Fe-2S] cluster. Asp-85 serves as a coordination point for Mg(2+). Cys-126 serves as a coordination point for [2Fe-2S] cluster. The Mg(2+) site is built by Asp-127 and Lys-128. Lys-128 is subject to N6-carboxylysine. Cys-203 is a [2Fe-2S] cluster binding site. Glu-454 is a binding site for Mg(2+). The active-site Proton acceptor is the Ser-480.

Belongs to the IlvD/Edd family. In terms of assembly, homodimer. The cofactor is [2Fe-2S] cluster. Mg(2+) serves as cofactor.

It catalyses the reaction (2R)-2,3-dihydroxy-3-methylbutanoate = 3-methyl-2-oxobutanoate + H2O. The catalysed reaction is (2R,3R)-2,3-dihydroxy-3-methylpentanoate = (S)-3-methyl-2-oxopentanoate + H2O. The protein operates within amino-acid biosynthesis; L-isoleucine biosynthesis; L-isoleucine from 2-oxobutanoate: step 3/4. It functions in the pathway amino-acid biosynthesis; L-valine biosynthesis; L-valine from pyruvate: step 3/4. Functions in the biosynthesis of branched-chain amino acids. Catalyzes the dehydration of (2R,3R)-2,3-dihydroxy-3-methylpentanoate (2,3-dihydroxy-3-methylvalerate) into 2-oxo-3-methylpentanoate (2-oxo-3-methylvalerate) and of (2R)-2,3-dihydroxy-3-methylbutanoate (2,3-dihydroxyisovalerate) into 2-oxo-3-methylbutanoate (2-oxoisovalerate), the penultimate precursor to L-isoleucine and L-valine, respectively. In Mycobacterium leprae (strain TN), this protein is Dihydroxy-acid dehydratase.